A 550-amino-acid polypeptide reads, in one-letter code: Arginine--tRNA ligase (550 aa).

The 'HIGH' region motif lies at 130–140; sequence ANPTGPIHLGG.

Belongs to the class-I aminoacyl-tRNA synthetase family. As to quaternary structure, monomer.

The protein resides in the cytoplasm. It carries out the reaction tRNA(Arg) + L-arginine + ATP = L-arginyl-tRNA(Arg) + AMP + diphosphate. The chain is Arginine--tRNA ligase from Rhodococcus jostii (strain RHA1).